We begin with the raw amino-acid sequence, 461 residues long: MPLLILLMLLAAGAAGAESATPSLHIGVNYGANADNLPSPTSVATFLATKTTIDRVKLFDANPTFISAFAGTPISLAVSLPNSALPALADKATGLDAARSWIRANLSPYVPATNVTLLLAGNEILLSTDTNLILSLLPAMRRLAQALKAEGLTGVRVTTPHYLGILAPSDGIPSNASFRAGYNTKLFPAMLQFHRDTGSPFMVNPYPYFSYRPETLNYALFRPNSGIYDPATKLNYTSMLDAQMDAIYTAMKKLGYGDVDIAVGEAGWPTQAEPGQIGVGVQEARDFNEGMIRVCSSGKGTPLMPNRTFETYLFSLFDENQKPGPIAERHFGLFNPDFTPVYDLGLLRDGASVAPTPSPNPSPNPSPKPAPSGGGKWCVAKDGANGTDLQNNINYACGFVDCKPIQSGGACFSPNSLQAHASYVMNAYYQANGHTDLACDFKGTGIVTSSDPSYGGCKYVS.

The N-terminal stretch at 1 to 23 (MPLLILLMLLAAGAAGAESATPS) is a signal peptide. Residue glutamate 123 is the Proton donor of the active site. Glutamate 265 (nucleophile) is an active-site residue. The tract at residues 350-375 (GASVAPTPSPNPSPNPSPKPAPSGGG) is disordered. Residues 356–370 (TPSPNPSPNPSPKPA) show a composition bias toward pro residues. A disulfide bridge connects residues cysteine 378 and cysteine 439.

It belongs to the glycosyl hydrolase 17 family. Contains two additional disulfide bonds.

The enzyme catalyses Hydrolysis of (1-&gt;3)-beta-D-glucosidic linkages in (1-&gt;3)-beta-D-glucans.. Functionally, is thought to be an important plant defense-related product against fungal pathogens. This is Glucan endo-1,3-beta-glucosidase (GLC1) from Triticum aestivum (Wheat).